The sequence spans 456 residues: tRNA modification GTPase MnmE (456 aa).

Arginine 24, glutamate 81, and lysine 120 together coordinate (6S)-5-formyl-5,6,7,8-tetrahydrofolate. The region spanning 216 to 379 (GMTVVIAGRP…LREHLKACMG (164 aa)) is the TrmE-type G domain. Residue asparagine 226 coordinates K(+). GTP-binding positions include 226-231 (NAGKSS), 245-251 (TEIAGTT), 270-273 (DTAG), 335-338 (NKAD), and 359-361 (SAR). Residue serine 230 participates in Mg(2+) binding. 3 residues coordinate K(+): threonine 245, isoleucine 247, and threonine 250. Position 251 (threonine 251) interacts with Mg(2+). Lysine 456 is a binding site for (6S)-5-formyl-5,6,7,8-tetrahydrofolate.

Belongs to the TRAFAC class TrmE-Era-EngA-EngB-Septin-like GTPase superfamily. TrmE GTPase family. Homodimer. Heterotetramer of two MnmE and two MnmG subunits. The cofactor is K(+).

It is found in the cytoplasm. Its function is as follows. Exhibits a very high intrinsic GTPase hydrolysis rate. Involved in the addition of a carboxymethylaminomethyl (cmnm) group at the wobble position (U34) of certain tRNAs, forming tRNA-cmnm(5)s(2)U34. The protein is tRNA modification GTPase MnmE of Pseudomonas syringae pv. syringae (strain B728a).